The sequence spans 76 residues: MTVIRLTRIGRKKKPFYRVVVTDSRKRRDGGWIESIGYYNPLSEPKDIKIDKERLDYWKGVGAKMSERVEKLSQKA.

The protein belongs to the bacterial ribosomal protein bS16 family.

This Helicobacter acinonychis (strain Sheeba) protein is Small ribosomal subunit protein bS16.